The primary structure comprises 126 residues: Small ribosomal subunit protein uS12 (126 aa).

A 3-methylthioaspartic acid modification is found at Asp89.

The protein belongs to the universal ribosomal protein uS12 family. As to quaternary structure, part of the 30S ribosomal subunit. Contacts proteins S8 and S17. May interact with IF1 in the 30S initiation complex.

Functionally, with S4 and S5 plays an important role in translational accuracy. In terms of biological role, interacts with and stabilizes bases of the 16S rRNA that are involved in tRNA selection in the A site and with the mRNA backbone. Located at the interface of the 30S and 50S subunits, it traverses the body of the 30S subunit contacting proteins on the other side and probably holding the rRNA structure together. The combined cluster of proteins S8, S12 and S17 appears to hold together the shoulder and platform of the 30S subunit. The chain is Small ribosomal subunit protein uS12 from Polynucleobacter asymbioticus (strain DSM 18221 / CIP 109841 / QLW-P1DMWA-1) (Polynucleobacter necessarius subsp. asymbioticus).